A 61-amino-acid chain; its full sequence is MARAGILVVDGKVWRTVYYRFATREEWEGKVSTNLIFKECRQSAAMKRVLRVYKRTSMGTQ.

The polypeptide is Putative protein RenD (renD) (Escherichia coli (strain K12)).